The chain runs to 432 residues: Enolase (432 aa).

Q163 is a (2R)-2-phosphoglycerate binding site. Catalysis depends on E205, which acts as the Proton donor. The Mg(2+) site is built by D242, E285, and D312. (2R)-2-phosphoglycerate is bound by residues K337, R366, S367, and K388. K337 (proton acceptor) is an active-site residue.

Belongs to the enolase family. The cofactor is Mg(2+).

Its subcellular location is the cytoplasm. The protein resides in the secreted. The protein localises to the cell surface. It carries out the reaction (2R)-2-phosphoglycerate = phosphoenolpyruvate + H2O. It participates in carbohydrate degradation; glycolysis; pyruvate from D-glyceraldehyde 3-phosphate: step 4/5. In terms of biological role, catalyzes the reversible conversion of 2-phosphoglycerate (2-PG) into phosphoenolpyruvate (PEP). It is essential for the degradation of carbohydrates via glycolysis. This is Enolase from Bifidobacterium longum subsp. infantis (strain ATCC 15697 / DSM 20088 / JCM 1222 / NCTC 11817 / S12).